We begin with the raw amino-acid sequence, 232 residues long: Beta-casein (232 aa).

A signal peptide spans 1–15 (MKVLILACRVALALA). Serine 30, serine 32, serine 33, and serine 34 each carry phosphoserine.

This sequence belongs to the beta-casein family. Mammary gland specific. Secreted in milk.

Its subcellular location is the secreted. In terms of biological role, important role in determination of the surface properties of the casein micelles. In Camelus dromedarius (Dromedary), this protein is Beta-casein (CSN2).